The chain runs to 290 residues: Oxaloacetate decarboxylase 2 (290 aa).

Serine 50 contacts substrate. Aspartate 88 lines the Mg(2+) pocket. Substrate is bound by residues arginine 159 and histidine 235.

This sequence belongs to the isocitrate lyase/PEP mutase superfamily. Oxaloacetate decarboxylase family. In terms of assembly, homotetramer; dimer of dimers. It depends on Mg(2+) as a cofactor.

The catalysed reaction is oxaloacetate + H(+) = pyruvate + CO2. Catalyzes the decarboxylation of oxaloacetate into pyruvate. Seems to play a role in maintaining cellular concentrations of bicarbonate and pyruvate. This chain is Oxaloacetate decarboxylase 2, found in Pseudomonas fluorescens (strain Pf0-1).